The sequence spans 207 residues: Dephospho-CoA kinase (207 aa).

The 199-residue stretch at 5-203 (AVGLTGGIAC…ARYRALASVF (199 aa)) folds into the DPCK domain. 13–18 (ACGKSL) provides a ligand contact to ATP.

The protein belongs to the CoaE family.

It localises to the cytoplasm. It catalyses the reaction 3'-dephospho-CoA + ATP = ADP + CoA + H(+). It functions in the pathway cofactor biosynthesis; coenzyme A biosynthesis; CoA from (R)-pantothenate: step 5/5. Its function is as follows. Catalyzes the phosphorylation of the 3'-hydroxyl group of dephosphocoenzyme A to form coenzyme A. This Xylella fastidiosa (strain 9a5c) protein is Dephospho-CoA kinase.